A 156-amino-acid polypeptide reads, in one-letter code: Ribonuclease pancreatic (156 aa).

Residues 1-28 form the signal peptide; sequence MALEKSLALLPLLVLVLLVLGWVQPSLG. Residues 33-43 show a composition bias toward basic and acidic residues; the sequence is AQKFQRQHMDS. Residues 33 to 52 are disordered; sequence AQKFQRQHMDSDGSPSSNPT. Positions 35 and 38 each coordinate substrate. Residue His-40 is the Proton acceptor of the active site. Intrachain disulfides connect Cys-54–Cys-112, Cys-68–Cys-123, Cys-86–Cys-138, and Cys-93–Cys-100. Asn-62 carries N-linked (GlcNAc...) asparagine glycosylation. Substrate-binding positions include 69–73, Lys-94, and Arg-113; that span reads KPVNT. N-linked (GlcNAc...) asparagine glycosylation occurs at Asn-116. His-147 acts as the Proton donor in catalysis.

This sequence belongs to the pancreatic ribonuclease family. As to quaternary structure, monomer. Interacts with and forms tight 1:1 complexes with RNH1. Dimerization of two such complexes may occur. Interaction with RNH1 inhibits this protein.

The protein resides in the secreted. It carries out the reaction an [RNA] containing cytidine + H2O = an [RNA]-3'-cytidine-3'-phosphate + a 5'-hydroxy-ribonucleotide-3'-[RNA].. The catalysed reaction is an [RNA] containing uridine + H2O = an [RNA]-3'-uridine-3'-phosphate + a 5'-hydroxy-ribonucleotide-3'-[RNA].. In terms of biological role, endonuclease that catalyzes the cleavage of RNA on the 3' side of pyrimidine nucleotides. Acts on single-stranded and double-stranded RNA. The protein is Ribonuclease pancreatic (RNASE1) of Saguinus oedipus (Cotton-top tamarin).